The following is a 398-amino-acid chain: Ras-related GTP-binding protein C (398 aa).

The interval 1-56 is disordered; sequence MSLQYGAEETPLAGSYGAADSFPKDFGYGVEEEEEEAAAGGGGGAGAGGGCGPGGA. An N-acetylserine modification is found at S2. Phosphoserine occurs at positions 2 and 15. Gly residues predominate over residues 39–55; the sequence is AGGGGGAGAGGGCGPGG. GDP is bound by residues R70, S71, G72, K73, S74, and S75. K73 provides a ligand contact to GTP. GTP contacts are provided by T89 and T95. T95 is subject to Phosphothreonine. GDP is bound by residues H177, K178, D180, and I219. A GTP-binding site is contributed by D180.

The protein belongs to the GTR/RAG GTP-binding protein family. As to quaternary structure, forms a heterodimer with RRAGA, in a sequence-independent manner, and RRAGB. Heterodimerization stabilizes proteins of the heterodimer. The GDP-bound form of RRAGC (in complex with the GTP-bound form of RRAGA or RRAGB), interacts with RPTOR, thereby promoting recruitment of mTORC1 to the lysosomes. Component of the lysosomal folliculin complex (LFC), composed of FLCN, FNIP1 (or FNIP2), RagA/RRAGA or RagB/RRAGB GDP-bound, RagC/RRAGC or RagD/RRAGD GTP-bound, and Ragulator. Interacts with NOL8. Interacts with SH3BP4; the interaction with this negative regulator is most probably direct, preferentially occurs with the inactive GDP-bound form of RRAGB, is negatively regulated by amino acids and prevents interaction with RPTOR. The Rag heterodimer interacts with SLC38A9; the probable amino acid sensor. Interacts with SESN1, SESN2 and SESN3. Interacts with PIP4P1. The GDP-bound form interacts with TFEB. The GDP-bound form interacts with TFE3. Expressed most abundantly in kidney. Moderately expressed in brain, ovary, and testis, and detected at lower levels in heart, liver, and muscle. Not detected in lung, spleen, and small intestine. Widely expressed in tumor cells, with expression being specifically up-regulated in highly metastatic cells.

The protein localises to the cytoplasm. Its subcellular location is the nucleus. It localises to the lysosome membrane. It catalyses the reaction GTP + H2O = GDP + phosphate + H(+). With respect to regulation, the activation of RagC/RRAGC is mediated by a GTPase activating protein (GAP). In high-amino acid conditions, activated by GTPase activating protein FLCN that stimulates RRAGC GTPase activity to turn it into its active GDP-bound form. In response to amino acid depletion, the GATOR1 complex inactivates RagC/RRAGC by securing the GTP-bound inactive form. Functionally, guanine nucleotide-binding protein that plays a crucial role in the cellular response to amino acid availability through regulation of the mTORC1 signaling cascade. Forms heterodimeric Rag complexes with RagA/RRAGA or RagB/RRAGB and cycles between an inactive GTP-bound and an active GDP-bound form: RagC/RRAGC is in its active form when GDP-bound RagC/RRAGC forms a complex with GTP-bound RagA/RRAGA (or RagB/RRAGB) and in an inactive form when GTP-bound RagC/RRAGC heterodimerizes with GDP-bound RagA/RRAGA (or RagB/RRAGB). In its GDP-bound active form, promotes the recruitment of mTORC1 to the lysosomes and its subsequent activation by the GTPase RHEB. This is a crucial step in the activation of the MTOR signaling cascade by amino acids. Also plays a central role in the non-canonical mTORC1 complex, which acts independently of RHEB and specifically mediates phosphorylation of MiT/TFE factors TFEB and TFE3: GDP-bound RagC/RRAGC mediates recruitment of MiT/TFE factors TFEB and TFE3. This Mus musculus (Mouse) protein is Ras-related GTP-binding protein C.